A 239-amino-acid polypeptide reads, in one-letter code: Protein canopy homolog 4 (239 aa).

An N-terminal signal peptide occupies residues 1-20; the sequence is MGPVRLGTLLFILTVYGAWA. 3 disulfides stabilise this stretch: C37-C195, C40-C183, and C93-C155. The segment at 199-239 is disordered; it reads TWTGKEKITDGQEKTEEEEQDQEEEEMTNTPVHSQHDPEDL. Residues 201 to 212 show a composition bias toward basic and acidic residues; sequence TGKEKITDGQEK. Residues 213-225 are compositionally biased toward acidic residues; that stretch reads TEEEEQDQEEEEM.

It belongs to the canopy family. Interacts with TLR4.

The protein resides in the secreted. Its function is as follows. Plays a role in the regulation of the cell surface expression of TLR4. The sequence is that of Protein canopy homolog 4 (CNPY4) from Bos taurus (Bovine).